A 444-amino-acid chain; its full sequence is CBL-interacting serine/threonine-protein kinase 1 (444 aa).

The 256-residue stretch at 20–275 (YELGRTLGEG…VVGIKASEWF (256 aa)) folds into the Protein kinase domain. Residues 26 to 34 (LGEGNFGKV) and Lys49 contribute to the ATP site. The Proton acceptor role is filled by Asp143. The segment at 161-190 (DFGLSALPQHFRDDGLLHTTCGSPNYVAPE) is activation loop. Ser165 is subject to Phosphoserine. Thr179 carries the phosphothreonine modification. An NAF domain is found at 313–337 (DSPTIINAFQLIGMSSFLDLSGFFE). Residues 343–372 (ERRIRFTSNSSAKDLLEKIETAVTEMGFSV) form a PPI region.

It belongs to the protein kinase superfamily. CAMK Ser/Thr protein kinase family. SNF1 subfamily. Interacts with CBL1. Interacts with CBL2. Interacts with CBL3. Interacts with CBL9. Interacts with ECT1 and ECT2. The cofactor is Mn(2+). Autophosphorylated. In terms of tissue distribution, ubiquitous.

It carries out the reaction L-seryl-[protein] + ATP = O-phospho-L-seryl-[protein] + ADP + H(+). The enzyme catalyses L-threonyl-[protein] + ATP = O-phospho-L-threonyl-[protein] + ADP + H(+). Functionally, CIPK serine-threonine protein kinases interact with CBL proteins. Binding of a CBL protein to the regulatory NAF domain of CIPK protein lead to the activation of the kinase in a calcium-dependent manner. In Arabidopsis thaliana (Mouse-ear cress), this protein is CBL-interacting serine/threonine-protein kinase 1 (CIPK1).